A 167-amino-acid chain; its full sequence is 3-isopropylmalate dehydratase small subunit (167 aa).

Belongs to the LeuD family. LeuD type 2 subfamily. As to quaternary structure, heterodimer of LeuC and LeuD.

The catalysed reaction is (2R,3S)-3-isopropylmalate = (2S)-2-isopropylmalate. Its pathway is amino-acid biosynthesis; L-leucine biosynthesis; L-leucine from 3-methyl-2-oxobutanoate: step 2/4. Catalyzes the isomerization between 2-isopropylmalate and 3-isopropylmalate, via the formation of 2-isopropylmaleate. The protein is 3-isopropylmalate dehydratase small subunit of Sulfurimonas denitrificans (strain ATCC 33889 / DSM 1251) (Thiomicrospira denitrificans (strain ATCC 33889 / DSM 1251)).